The chain runs to 173 residues: Adenine phosphoribosyltransferase (173 aa).

This sequence belongs to the purine/pyrimidine phosphoribosyltransferase family. As to quaternary structure, homodimer.

The protein localises to the cytoplasm. The enzyme catalyses AMP + diphosphate = 5-phospho-alpha-D-ribose 1-diphosphate + adenine. Its pathway is purine metabolism; AMP biosynthesis via salvage pathway; AMP from adenine: step 1/1. Its function is as follows. Catalyzes a salvage reaction resulting in the formation of AMP, that is energically less costly than de novo synthesis. This chain is Adenine phosphoribosyltransferase, found in Listeria monocytogenes serovar 1/2a (strain ATCC BAA-679 / EGD-e).